Consider the following 768-residue polypeptide: MSWMQNLKNYQHLRDPSEYMSQVYGDPLAYLQENTKFVTEREYYEDFGYGECFNSSESEVQCELITGEFDPKLLPYDKRLAWHFKEFCYKTSAHGIPMIGEAPNVYYRAVWVMLFLGCMIMLYLNAQSVLDKYNRNEKIVDIQLKFDTAPFPAITLCNLNPYKASLATSVDLVKRTLSAFDGAMGKAGGNKEHDGEKEVITEAPTTPAPTTKPSRRRGKRDLSGAFFEPGFARCLCGSQGSSEQEDKDDEKEEEMHETTTRKPFNINDADEEWDGMEEYDNNEHYENYDVEATTGMNMMEECQSERTKFDEPTGFDDRCICAFDRSTHDAWPCFLNGTWETTECDTCNEHAFCTKDNKTAKGHRSPCICAPSKFCVAYNGKTPPIEIWTYLQGGTPTEDPNFLEAMGFQGMTDEVAIVTKAKENMFAMATLSMQDRERLSTTKRELVHKCSFNGKACDIEADFLTHIDPVFGSCFTFNHNRTVNLTSIRAGPMYGLRMLVYVNASDYMPTTEATGVRLTIHDKEDFPFPDTFGYSAPTGYVSSFGLRLRKMSRLPAPYGDCVPDGKTSDYIYSNYEYSVEGCYRSCFQQLVLKECRCGDPRFPVPEGARHCDAADPVARRCLDARMNDLGGLHGSFRCRCQQPCRQSIYSVTYSPAKWPSLSLQIQLGSCNGTAVECNKHYKENGAMVEVFYEQLNFEMLTESEAYGFVNLLADFGGQLGLWCGISFLTCCEFVFLFLETAYMSAEHNYSLYKKKKAEKAKKVASGSF.

The Cytoplasmic segment spans residues 1–109 (MSWMQNLKNY…GEAPNVYYRA (109 aa)). Residues 110 to 130 (VWVMLFLGCMIMLYLNAQSVL) form a helical membrane-spanning segment. Over 131-718 (DKYNRNEKIV…VNLLADFGGQ (588 aa)) the chain is Extracellular. Disordered regions lie at residues 187 to 221 (AGGN…GKRD) and 237 to 260 (GSQG…ETTT). A compositionally biased stretch (basic and acidic residues) spans 189 to 200 (GNKEHDGEKEVI). The segment covering 203–212 (APTTPAPTTK) has biased composition (low complexity). Residues 243-252 (EQEDKDDEKE) are compositionally biased toward acidic residues. N-linked (GlcNAc...) asparagine glycosylation is found at Asn-336, Asn-357, Asn-480, Asn-484, Asn-503, and Asn-671. Residues 719 to 739 (LGLWCGISFLTCCEFVFLFLE) traverse the membrane as a helical segment. The Cytoplasmic segment spans residues 740–768 (TAYMSAEHNYSLYKKKKAEKAKKVASGSF).

It belongs to the amiloride-sensitive sodium channel (TC 1.A.6) family. As to quaternary structure, the channel is probably composed of at least the mec-2, mec-4, mec-6 and mec-10 subunits.

The protein localises to the membrane. In terms of biological role, probable sodium channel subunit. May be needed for mechanosensory transduction (touch sensitivity). Negatively regulates the turning step of male mating behavior. This chain is Degenerin mec-4 (mec-4), found in Caenorhabditis briggsae.